Here is a 465-residue protein sequence, read N- to C-terminus: Spermidine/putrescine import ATP-binding protein PotA (465 aa).

Residues 1 to 18 (MTATSGARTSDARTSGAR) show a composition bias toward polar residues. The tract at residues 1–21 (MTATSGARTSDARTSGARTSD) is disordered. The ABC transporter domain occupies 30 to 264 (IELVGVAKDY…PRTRFVAGFI (235 aa)). Position 66-73 (66-73 (GPSGCGKS)) interacts with ATP.

Belongs to the ABC transporter superfamily. Spermidine/putrescine importer (TC 3.A.1.11.1) family. In terms of assembly, the complex is composed of two ATP-binding proteins (PotA), two transmembrane proteins (PotB and PotC) and a solute-binding protein (PotD).

The protein localises to the cell membrane. It catalyses the reaction ATP + H2O + polyamine-[polyamine-binding protein]Side 1 = ADP + phosphate + polyamineSide 2 + [polyamine-binding protein]Side 1.. In terms of biological role, part of the ABC transporter complex PotABCD involved in spermidine/putrescine import. Responsible for energy coupling to the transport system. The chain is Spermidine/putrescine import ATP-binding protein PotA from Frankia alni (strain DSM 45986 / CECT 9034 / ACN14a).